Here is a 464-residue protein sequence, read N- to C-terminus: ATP synthase subunit beta (464 aa).

Residue 153–160 (GGAGVGKT) participates in ATP binding.

It belongs to the ATPase alpha/beta chains family. As to quaternary structure, F-type ATPases have 2 components, CF(1) - the catalytic core - and CF(0) - the membrane proton channel. CF(1) has five subunits: alpha(3), beta(3), gamma(1), delta(1), epsilon(1). CF(0) has three main subunits: a(1), b(2) and c(9-12). The alpha and beta chains form an alternating ring which encloses part of the gamma chain. CF(1) is attached to CF(0) by a central stalk formed by the gamma and epsilon chains, while a peripheral stalk is formed by the delta and b chains.

The protein localises to the cell membrane. The catalysed reaction is ATP + H2O + 4 H(+)(in) = ADP + phosphate + 5 H(+)(out). Its function is as follows. Produces ATP from ADP in the presence of a proton gradient across the membrane. The catalytic sites are hosted primarily by the beta subunits. The protein is ATP synthase subunit beta of Clostridium novyi (strain NT).